The sequence spans 324 residues: Anthranilate phosphoribosyltransferase (324 aa).

Residues Gly-72, Gly-75–Asp-76, Thr-80, Asn-82–Thr-85, Lys-99–Ser-107, and Ser-111 each bind 5-phospho-alpha-D-ribose 1-diphosphate. Gly-72 contacts anthranilate. Ser-84 contacts Mg(2+). Residue Asn-102 participates in anthranilate binding. Residue Arg-157 participates in anthranilate binding. The Mg(2+) site is built by Asp-215 and Glu-216.

This sequence belongs to the anthranilate phosphoribosyltransferase family. Homodimer. Mg(2+) serves as cofactor.

It catalyses the reaction N-(5-phospho-beta-D-ribosyl)anthranilate + diphosphate = 5-phospho-alpha-D-ribose 1-diphosphate + anthranilate. It functions in the pathway amino-acid biosynthesis; L-tryptophan biosynthesis; L-tryptophan from chorismate: step 2/5. Catalyzes the transfer of the phosphoribosyl group of 5-phosphorylribose-1-pyrophosphate (PRPP) to anthranilate to yield N-(5'-phosphoribosyl)-anthranilate (PRA). The sequence is that of Anthranilate phosphoribosyltransferase from Pyrococcus furiosus (strain ATCC 43587 / DSM 3638 / JCM 8422 / Vc1).